We begin with the raw amino-acid sequence, 888 residues long: MGGCVSVSISCDQLTKNVCSCLNRNGDYIHGLEENLTALQRALEQIEQRREDLLRKILSEERRGLQRLSVVQGWVSKVEAIVPRVNELVRMRSVQVQRLCLCGFCSKNLVSSYRYGKRVMKMIEEVEVLRYQGDFAVVAERVDAARVEERPTRPMVAMDPMLESAWNRLMEDEIGILGLHGMGGVGKTTLLSHINNRFSRVGGEFDIVIWIVVSKELQIQRIQDEIWEKLRSDNEKWKQKTEDIKASNIYNVLKHKRFVLLLDDIWSKVDLTEVGVPFPSRENGCKIVFTTRLKEICGRMGVDSDMEVRCLAPDDAWDLFTKKVGEITLGSHPEIPTVARTVAKKCRGLPLALNVIGETMAYKRTVQEWRSAIDVLTSSAAEFSGMEDEILPILKYSYDNLKSEQLKLCFQYCALFPEDHNIEKNDLVDYWIGEGFIDRNKGKAENQGYEIIGILVRSCLLMEENQETVKMHDVVREMALWIASDFGKQKENFIVQAGLQSRNIPEIEKWKVARRVSLMFNNIESIRDAPESPQLITLLLRKNFLGHISSSFFRLMPMLVVLDLSMNRDLRHLPNEISECVSLQYLSLSRTRIRIWPAGLVELRKLLYLNLEYTRMVESICGISGLTSLKVLRLFVSGFPEDPCVLNELQLLENLQTLTITLGLASILEQFLSNQRLASCTRALRIENLNPQSSVISFVATMDSLQELHFADSDIWEIKVKRNETVLPLHIPTTTTFFPNLSQVSLEFCTRLRDLTWLIFAPNLTVLRVISASDLKEVINKEKAEQQNLIPFQELKELRLENVQMLKHIHRGPLPFPCLQKILVNGCSELRKLPLNFTSVPRGDLVIEAHKKWIEILEWEDEATKARFLPTLKAFPENIDADGYEISF.

Residues 22–66 adopt a coiled-coil conformation; that stretch reads LNRNGDYIHGLEENLTALQRALEQIEQRREDLLRKILSEERRGLQ. In terms of domain architecture, NB-ARC spans 139–442; the sequence is AERVDAARVE…GEGFIDRNKG (304 aa). Residue 181–188 participates in ATP binding; it reads GMGGVGKT. LRR repeat units lie at residues 512 to 533, 534 to 555, 558 to 580, 582 to 604, and 605 to 627; these read VARR…PESP, QLIT…FFRL, MLVV…ISEC, SLQY…VELR, and KLLY…SGLT.

This sequence belongs to the disease resistance NB-LRR family.

In terms of biological role, probable disease resistance protein. In Arabidopsis thaliana (Mouse-ear cress), this protein is Probable disease resistance protein At5g63020.